Here is a 359-residue protein sequence, read N- to C-terminus: Fe-S cluster assembly protein DRE2 (359 aa).

The N-terminal SAM-like domain stretch occupies residues 1-148 (MASTGRVLLL…KPDVAAQQAV (148 aa)). Disordered regions lie at residues 97 to 116 (NKAW…NDND) and 149 to 210 (PLKL…PSGV). A linker region spans residues 149 to 246 (PLKLGRRKKE…EDELLGEDDM (98 aa)). Residues 152 to 164 (LGRRKKEKERRHP) are compositionally biased toward basic residues. The span at 167–183 (NDVTNGKVNAPSSNGVN) shows a compositional bias: polar residues. The segment covering 184–200 (ASTSTATATATTTTTTT) has biased composition (low complexity). Residues cysteine 256, cysteine 267, cysteine 270, and cysteine 272 each contribute to the [2Fe-2S] cluster site. The interval 256 to 272 (CRPKPGKRRRACKDCSC) is fe-S binding site A. Cysteine 322, cysteine 325, cysteine 333, and cysteine 336 together coordinate [4Fe-4S] cluster. 2 consecutive short sequence motifs (cx2C motif) follow at residues 322 to 325 (CGNC) and 333 to 336 (CDGC). A fe-S binding site B region spans residues 322–336 (CGNCSLGDAFRCDGC).

The protein belongs to the anamorsin family. As to quaternary structure, monomer. Interacts with TAH18. Interacts with MIA40. It depends on [2Fe-2S] cluster as a cofactor. [4Fe-4S] cluster is required as a cofactor.

The protein resides in the cytoplasm. Its subcellular location is the mitochondrion intermembrane space. Its function is as follows. Component of the cytosolic iron-sulfur (Fe-S) protein assembly (CIA) machinery required for the maturation of extramitochondrial Fe-S proteins. Part of an electron transfer chain functioning in an early step of cytosolic Fe-S biogenesis, facilitating the de novo assembly of a [4Fe-4S] cluster on the scaffold complex CFD1-NBP35. Electrons are transferred to DRE2 from NADPH via the FAD- and FMN-containing protein TAH18. TAH18-DRE2 are also required for the assembly of the diferric tyrosyl radical cofactor of ribonucleotide reductase (RNR), probably by providing electrons for reduction during radical cofactor maturation in the catalytic small subunit RNR2. This is Fe-S cluster assembly protein DRE2 from Blastomyces gilchristii (strain SLH14081) (Blastomyces dermatitidis).